The chain runs to 173 residues: Putative pre-16S rRNA nuclease (173 aa).

Belongs to the YqgF nuclease family.

It localises to the cytoplasm. Could be a nuclease involved in processing of the 5'-end of pre-16S rRNA. This Rhodopirellula baltica (strain DSM 10527 / NCIMB 13988 / SH1) protein is Putative pre-16S rRNA nuclease.